The chain runs to 393 residues: NAD(P)H-quinone oxidoreductase subunit H, chloroplastic (393 aa).

This sequence belongs to the complex I 49 kDa subunit family. As to quaternary structure, NDH is composed of at least 16 different subunits, 5 of which are encoded in the nucleus.

The protein localises to the plastid. It localises to the chloroplast thylakoid membrane. The enzyme catalyses a plastoquinone + NADH + (n+1) H(+)(in) = a plastoquinol + NAD(+) + n H(+)(out). It catalyses the reaction a plastoquinone + NADPH + (n+1) H(+)(in) = a plastoquinol + NADP(+) + n H(+)(out). NDH shuttles electrons from NAD(P)H:plastoquinone, via FMN and iron-sulfur (Fe-S) centers, to quinones in the photosynthetic chain and possibly in a chloroplast respiratory chain. The immediate electron acceptor for the enzyme in this species is believed to be plastoquinone. Couples the redox reaction to proton translocation, and thus conserves the redox energy in a proton gradient. The protein is NAD(P)H-quinone oxidoreductase subunit H, chloroplastic of Olimarabidopsis pumila (Dwarf rocket).